We begin with the raw amino-acid sequence, 262 residues long: Indole-3-glycerol phosphate synthase (262 aa).

It belongs to the TrpC family.

The enzyme catalyses 1-(2-carboxyphenylamino)-1-deoxy-D-ribulose 5-phosphate + H(+) = (1S,2R)-1-C-(indol-3-yl)glycerol 3-phosphate + CO2 + H2O. It functions in the pathway amino-acid biosynthesis; L-tryptophan biosynthesis; L-tryptophan from chorismate: step 4/5. This chain is Indole-3-glycerol phosphate synthase, found in Clostridium acetobutylicum (strain ATCC 824 / DSM 792 / JCM 1419 / IAM 19013 / LMG 5710 / NBRC 13948 / NRRL B-527 / VKM B-1787 / 2291 / W).